The sequence spans 197 residues: ATP-dependent Clp protease proteolytic subunit (197 aa).

The active-site Nucleophile is the S98. H123 is a catalytic residue.

It belongs to the peptidase S14 family. In terms of assembly, fourteen ClpP subunits assemble into 2 heptameric rings which stack back to back to give a disk-like structure with a central cavity, resembling the structure of eukaryotic proteasomes.

Its subcellular location is the cytoplasm. It carries out the reaction Hydrolysis of proteins to small peptides in the presence of ATP and magnesium. alpha-casein is the usual test substrate. In the absence of ATP, only oligopeptides shorter than five residues are hydrolyzed (such as succinyl-Leu-Tyr-|-NHMec, and Leu-Tyr-Leu-|-Tyr-Trp, in which cleavage of the -Tyr-|-Leu- and -Tyr-|-Trp bonds also occurs).. In terms of biological role, cleaves peptides in various proteins in a process that requires ATP hydrolysis. Has a chymotrypsin-like activity. Plays a major role in the degradation of misfolded proteins. In Limosilactobacillus reuteri (strain DSM 20016) (Lactobacillus reuteri), this protein is ATP-dependent Clp protease proteolytic subunit.